The primary structure comprises 591 residues: L-fucose isomerase (591 aa).

Active-site proton acceptor residues include Glu-337 and Asp-361. Mn(2+) contacts are provided by Glu-337, Asp-361, and His-528.

Belongs to the L-fucose isomerase family. Homohexamer. It depends on Mn(2+) as a cofactor.

It is found in the cytoplasm. It catalyses the reaction L-fucose = L-fuculose. It participates in carbohydrate degradation; L-fucose degradation; L-lactaldehyde and glycerone phosphate from L-fucose: step 1/3. Converts the aldose L-fucose into the corresponding ketose L-fuculose. The sequence is that of L-fucose isomerase from Salmonella typhi.